We begin with the raw amino-acid sequence, 49 residues long: Large ribosomal subunit protein bL32 (49 aa).

The protein belongs to the bacterial ribosomal protein bL32 family.

The protein is Large ribosomal subunit protein bL32 of Helicobacter hepaticus (strain ATCC 51449 / 3B1).